The following is a 91-amino-acid chain: Probable Fe(2+)-trafficking protein (91 aa).

It belongs to the Fe(2+)-trafficking protein family.

Could be a mediator in iron transactions between iron acquisition and iron-requiring processes, such as synthesis and/or repair of Fe-S clusters in biosynthetic enzymes. This is Probable Fe(2+)-trafficking protein from Burkholderia mallei (strain NCTC 10247).